A 118-amino-acid polypeptide reads, in one-letter code: Putative pterin-4-alpha-carbinolamine dehydratase (118 aa).

Belongs to the pterin-4-alpha-carbinolamine dehydratase family.

The enzyme catalyses (4aS,6R)-4a-hydroxy-L-erythro-5,6,7,8-tetrahydrobiopterin = (6R)-L-erythro-6,7-dihydrobiopterin + H2O. The chain is Putative pterin-4-alpha-carbinolamine dehydratase from Pseudomonas putida (strain GB-1).